The primary structure comprises 121 residues: Immunoglobulin kappa variable 2-40 (121 aa).

The signal sequence occupies residues 1 to 19; that stretch reads MRLPAQLLGLLMLWVPGSS. Residues 20–121 form the Ig-like domain; it reads EDIVMTQTPL…YYCMQRIEFP (102 aa). Residues 21 to 43 are framework-1; sequence DIVMTQTPLSLPVTPGEPASISC. Cys43 and Cys114 form a disulfide bridge. The tract at residues 44–60 is complementarity-determining-1; that stretch reads RSSQSLLDSDDGNTYLD. Residues 61–75 are framework-2; that stretch reads WYLQKPGQSPQLLIY. The complementarity-determining-2 stretch occupies residues 76–82; that stretch reads TLSYRAS. The framework-3 stretch occupies residues 83–114; that stretch reads GVPDRFSGSGSGTDFTLKISRVEAEDVGVYYC. The interval 115–121 is complementarity-determining-3; it reads MQRIEFP.

As to quaternary structure, immunoglobulins are composed of two identical heavy chains and two identical light chains; disulfide-linked.

It is found in the secreted. It localises to the cell membrane. Functionally, v region of the variable domain of immunoglobulin light chains that participates in the antigen recognition. Immunoglobulins, also known as antibodies, are membrane-bound or secreted glycoproteins produced by B lymphocytes. In the recognition phase of humoral immunity, the membrane-bound immunoglobulins serve as receptors which, upon binding of a specific antigen, trigger the clonal expansion and differentiation of B lymphocytes into immunoglobulins-secreting plasma cells. Secreted immunoglobulins mediate the effector phase of humoral immunity, which results in the elimination of bound antigens. The antigen binding site is formed by the variable domain of one heavy chain, together with that of its associated light chain. Thus, each immunoglobulin has two antigen binding sites with remarkable affinity for a particular antigen. The variable domains are assembled by a process called V-(D)-J rearrangement and can then be subjected to somatic hypermutations which, after exposure to antigen and selection, allow affinity maturation for a particular antigen. This chain is Immunoglobulin kappa variable 2-40, found in Homo sapiens (Human).